Reading from the N-terminus, the 122-residue chain is MIQSFTRLSVADNSGAKEIMCIKILGGSHRRYARVGDVIVASVKKAIPNGKVKKGQVVKAVVVRTKKEIHRENGSLVRFDDNAAVILDAKKEPIGTRIFGPVSREVRYANFMKIVSLAPEVL.

The protein belongs to the universal ribosomal protein uL14 family. In terms of assembly, part of the 50S ribosomal subunit. Forms a cluster with proteins L3 and L19. In the 70S ribosome, L14 and L19 interact and together make contacts with the 16S rRNA in bridges B5 and B8.

Functionally, binds to 23S rRNA. Forms part of two intersubunit bridges in the 70S ribosome. This Helicobacter hepaticus (strain ATCC 51449 / 3B1) protein is Large ribosomal subunit protein uL14.